Here is a 230-residue protein sequence, read N- to C-terminus: Cytidylate kinase (230 aa).

G12–T20 serves as a coordination point for ATP.

The protein belongs to the cytidylate kinase family. Type 1 subfamily.

It localises to the cytoplasm. The enzyme catalyses CMP + ATP = CDP + ADP. The catalysed reaction is dCMP + ATP = dCDP + ADP. This Shewanella piezotolerans (strain WP3 / JCM 13877) protein is Cytidylate kinase.